The sequence spans 407 residues: Peptidase T (407 aa).

Zn(2+) is bound at residue histidine 82. Aspartate 84 is a catalytic residue. Residue aspartate 143 coordinates Zn(2+). Catalysis depends on glutamate 177, which acts as the Proton acceptor. Residues glutamate 178, aspartate 200, and histidine 382 each contribute to the Zn(2+) site.

This sequence belongs to the peptidase M20B family. Zn(2+) is required as a cofactor.

The protein localises to the cytoplasm. It carries out the reaction Release of the N-terminal residue from a tripeptide.. Functionally, cleaves the N-terminal amino acid of tripeptides. This is Peptidase T from Streptococcus equi subsp. equi (strain 4047).